Reading from the N-terminus, the 276-residue chain is MGYATAHRRVRHLSADQVITRPETLAVEEPLEIRVNGTPVTVTMRTPGSDFELVQGFLLAEGVVAHREDVLTVSYCGRRVEGNATGASTYNVLDVALAPGVKPPDVDVTRTFYTTSSCGVCGKASLQAVSQVSRFAPGGDPATVAADTLKAMPDQLRRAQKVFARTGGLHAAALFGVDGAMLAVREDIGRHNAVDKVIGWAFERDRIPLGASVLLVSGRASFELTQKALMAGIPVLAAVSAPSSLAVSLADASGITLVAFLRGDSMNVYTRADRIT.

Catalysis depends on C118, which acts as the Cysteine persulfide intermediate.

This sequence belongs to the FdhD family.

The protein resides in the cytoplasm. In terms of biological role, required for formate dehydrogenase (FDH) activity. Acts as a sulfur carrier protein that transfers sulfur from IscS to the molybdenum cofactor prior to its insertion into FDH. In Mycobacterium bovis (strain ATCC BAA-935 / AF2122/97), this protein is Sulfur carrier protein FdhD.